A 339-amino-acid chain; its full sequence is Serpentine receptor class alpha-20 (339 aa).

The next 6 membrane-spanning stretches (helical) occupy residues 30-50, 113-132, 151-171, 199-219, 249-269, and 284-304; these read VSFV…VLAI, LYFY…SLTF, VSIS…YFGL, FRTT…YLNV, CILI…VNYI, and IAPF…VIYF.

It belongs to the nematode receptor-like protein sra family.

It localises to the membrane. This chain is Serpentine receptor class alpha-20 (sra-20), found in Caenorhabditis elegans.